Here is a 379-residue protein sequence, read N- to C-terminus: NADH-quinone oxidoreductase subunit D 2 (379 aa).

The protein belongs to the complex I 49 kDa subunit family. In terms of assembly, NDH-1 is composed of 14 different subunits. Subunits NuoB, C, D, E, F, and G constitute the peripheral sector of the complex.

Its subcellular location is the cell inner membrane. It catalyses the reaction a quinone + NADH + 5 H(+)(in) = a quinol + NAD(+) + 4 H(+)(out). NDH-1 shuttles electrons from NADH, via FMN and iron-sulfur (Fe-S) centers, to quinones in the respiratory chain. The immediate electron acceptor for the enzyme in this species is believed to be ubiquinone. Couples the redox reaction to proton translocation (for every two electrons transferred, four hydrogen ions are translocated across the cytoplasmic membrane), and thus conserves the redox energy in a proton gradient. The sequence is that of NADH-quinone oxidoreductase subunit D 2 from Anaeromyxobacter dehalogenans (strain 2CP-C).